The chain runs to 409 residues: Peptidase T (409 aa).

His78 contacts Zn(2+). Asp80 is an active-site residue. Zn(2+) is bound at residue Asp140. The Proton acceptor role is filled by Glu173. The Zn(2+) site is built by Glu174, Asp196, and His379.

It belongs to the peptidase M20B family. The cofactor is Zn(2+).

The protein localises to the cytoplasm. It catalyses the reaction Release of the N-terminal residue from a tripeptide.. Functionally, cleaves the N-terminal amino acid of tripeptides. This is Peptidase T from Escherichia coli (strain SE11).